A 551-amino-acid polypeptide reads, in one-letter code: Serine/threonine-protein kinase ppk21 (551 aa).

The segment at 24-43 (EARGERNPVKPQSSNVVPGT) is disordered. A Protein kinase domain is found at 55–315 (YVFGDIIGDG…TQQIKQFPFF (261 aa)). ATP-binding positions include 65–67 (SFS) and Lys-84. Residues 86 to 131 (LDKKYIVKENKVKYVNIERDSMMRLNGFPGISRLFHTFQDDLKLYY) are PIF-pocket. Residues 134–136 (ELA) and Glu-140 each bind ATP. Residue Asp-179 is the Proton acceptor of the active site. ATP is bound by residues Glu-183 and Asp-197. A Phosphoserine; by autocatalysis modification is found at Ser-220. A Phosphoserine modification is found at Ser-538.

This sequence belongs to the protein kinase superfamily. AGC Ser/Thr protein kinase family. PDPK1 subfamily.

Its subcellular location is the cytoplasm. The protein resides in the nucleus. The protein localises to the cytoskeleton. It is found in the microtubule organizing center. It localises to the spindle pole body. It carries out the reaction L-seryl-[protein] + ATP = O-phospho-L-seryl-[protein] + ADP + H(+). It catalyses the reaction L-threonyl-[protein] + ATP = O-phospho-L-threonyl-[protein] + ADP + H(+). The chain is Serine/threonine-protein kinase ppk21 (ppk21) from Schizosaccharomyces pombe (strain 972 / ATCC 24843) (Fission yeast).